The following is a 545-amino-acid chain: Glucose-6-phosphate isomerase (545 aa).

E351 acts as the Proton donor in catalysis. Catalysis depends on residues H382 and K510.

The protein belongs to the GPI family.

The protein localises to the cytoplasm. It carries out the reaction alpha-D-glucose 6-phosphate = beta-D-fructose 6-phosphate. Its pathway is carbohydrate biosynthesis; gluconeogenesis. The protein operates within carbohydrate degradation; glycolysis; D-glyceraldehyde 3-phosphate and glycerone phosphate from D-glucose: step 2/4. Catalyzes the reversible isomerization of glucose-6-phosphate to fructose-6-phosphate. The sequence is that of Glucose-6-phosphate isomerase from Shewanella putrefaciens (strain CN-32 / ATCC BAA-453).